We begin with the raw amino-acid sequence, 431 residues long: Histidine--tRNA ligase (431 aa).

This sequence belongs to the class-II aminoacyl-tRNA synthetase family. In terms of assembly, homodimer.

The protein resides in the cytoplasm. It catalyses the reaction tRNA(His) + L-histidine + ATP = L-histidyl-tRNA(His) + AMP + diphosphate + H(+). The sequence is that of Histidine--tRNA ligase from Neisseria meningitidis serogroup A / serotype 4A (strain DSM 15465 / Z2491).